The chain runs to 142 residues: Hemoglobin subunit zeta (142 aa).

Ser-2 is modified (N-acetylserine). A Globin domain is found at 2–142 (SLTKTEGTII…VSSVLTEKYR (141 aa)). Phosphothreonine is present on Thr-29. Ser-53 carries the post-translational modification Phosphoserine. Residue His-59 coordinates heme b. Residues Ser-73 and Ser-82 each carry the phosphoserine modification. His-88 serves as a coordination point for heme b.

This sequence belongs to the globin family. Heterotetramer of two zeta chains and beta-type chains.

Functionally, the zeta chain is an alpha-type chain of mammalian embryonic hemoglobin. This chain is Hemoglobin subunit zeta (HBZ1), found in Pan troglodytes (Chimpanzee).